We begin with the raw amino-acid sequence, 102 residues long: Antimicrobial peptide 1 (102 aa).

The N-terminal stretch at 1–26 (MASTKLFFSVITVMMLIAMASEMVNG) is a signal peptide. 3 disulfides stabilise this stretch: Cys-37–Cys-90, Cys-47–Cys-102, and Cys-49–Cys-75.

The protein localises to the secreted. Functionally, antimicrobial peptide which inhibits the growth of a variety of fungi, oomycetes, Gram-positive bacterial phytopatogenes and S.cerevisiae in vitro. No activity against E.coli. This is Antimicrobial peptide 1 from Macadamia integrifolia (Macadamia nut).